Here is a 497-residue protein sequence, read N- to C-terminus: NADH-quinone oxidoreductase subunit N (497 aa).

The next 13 helical transmembrane spans lie at 12–32 (MAPE…DLAL), 40–60 (PLAW…AAMI), 80–100 (AFKF…AEWA), 116–136 (LFAL…TLFV), 166–186 (VING…VFGL), 208–228 (LALA…TVPF), 240–260 (PVPA…ALLL), 284–304 (MQPI…VVAL), 316–336 (SGIA…WAMI), 341–361 (MYLL…AHIV), 383–403 (AAAL…AGFI), 430–450 (TVIS…RPTF), and 457–477 (LPAG…AIGW).

It belongs to the complex I subunit 2 family. As to quaternary structure, NDH-1 is composed of 14 different subunits. Subunits NuoA, H, J, K, L, M, N constitute the membrane sector of the complex.

The protein localises to the cell membrane. It carries out the reaction a quinone + NADH + 5 H(+)(in) = a quinol + NAD(+) + 4 H(+)(out). In terms of biological role, NDH-1 shuttles electrons from NADH, via FMN and iron-sulfur (Fe-S) centers, to quinones in the respiratory chain. The immediate electron acceptor for the enzyme in this species is believed to be a menaquinone. Couples the redox reaction to proton translocation (for every two electrons transferred, four hydrogen ions are translocated across the cytoplasmic membrane), and thus conserves the redox energy in a proton gradient. The chain is NADH-quinone oxidoreductase subunit N from Geobacillus kaustophilus (strain HTA426).